We begin with the raw amino-acid sequence, 239 residues long: Large ribosomal subunit protein uL30 (239 aa).

Residues 1-37 (MSKFVPENVQKKLARDEKLRKAKAEQRKASSAQMKQR) are disordered. Positions 9 to 28 (VQKKLARDEKLRKAKAEQRK) are enriched in basic and acidic residues.

Belongs to the universal ribosomal protein uL30 family.

The polypeptide is Large ribosomal subunit protein uL30 (RPL7) (Tetrahymena thermophila).